A 377-amino-acid chain; its full sequence is Nitric oxide reductase FlRd-NAD(+) reductase (377 aa).

The protein belongs to the FAD-dependent oxidoreductase family. FAD is required as a cofactor.

It is found in the cytoplasm. It catalyses the reaction 2 reduced [nitric oxide reductase rubredoxin domain] + NAD(+) + H(+) = 2 oxidized [nitric oxide reductase rubredoxin domain] + NADH. Its pathway is nitrogen metabolism; nitric oxide reduction. Functionally, one of at least two accessory proteins for anaerobic nitric oxide (NO) reductase. Reduces the rubredoxin moiety of NO reductase. The chain is Nitric oxide reductase FlRd-NAD(+) reductase from Salmonella newport (strain SL254).